Here is a 203-residue protein sequence, read N- to C-terminus: FMN-dependent NADH:quinone oxidoreductase (203 aa).

FMN is bound by residues S9 and 15-17 (SKS).

Belongs to the azoreductase type 1 family. In terms of assembly, homodimer. FMN is required as a cofactor.

It carries out the reaction 2 a quinone + NADH + H(+) = 2 a 1,4-benzosemiquinone + NAD(+). The catalysed reaction is N,N-dimethyl-1,4-phenylenediamine + anthranilate + 2 NAD(+) = 2-(4-dimethylaminophenyl)diazenylbenzoate + 2 NADH + 2 H(+). In terms of biological role, quinone reductase that provides resistance to thiol-specific stress caused by electrophilic quinones. Functionally, also exhibits azoreductase activity. Catalyzes the reductive cleavage of the azo bond in aromatic azo compounds to the corresponding amines. This chain is FMN-dependent NADH:quinone oxidoreductase, found in Bordetella avium (strain 197N).